Here is a 158-residue protein sequence, read N- to C-terminus: Curculin-2 (158 aa).

The signal sequence occupies residues 1 to 22 (MAAKFLLTILVTFAAVASLGMA). A Bulb-type lectin domain is found at 23-131 (DSVLLSGQTL…VLWPLGLNGC (109 aa)). An intrachain disulfide couples Cys-51 to Cys-74. Asn-103 is a glycosylation site (N-linked (GlcNAc...) asparagine). Positions 136-158 (GEITVAKDSTEPQHEDIKMVINN) are excised as a propeptide.

As to quaternary structure, heterodimer with curculin-1; Disulfide-linked.

In terms of biological role, taste-modifying protein; sweet-tasting. After curculin, water elicits a sweet taste, and sour substances induce a stronger sense of sweetness. This is Curculin-2 from Molineria latifolia (Lumbah).